The following is a 276-amino-acid chain: Protein MGF 360-15R (276 aa).

The protein belongs to the asfivirus MGF 360 family.

Plays a role in virus cell tropism, and may be required for efficient virus replication in macrophages. The polypeptide is Protein MGF 360-15R (Ornithodoros (relapsing fever ticks)).